The sequence spans 440 residues: Transposon Ty1-LR2 Gag polyprotein (440 aa).

Polar residues-rich tracts occupy residues 1 to 23 (MESQ…SVTS), 48 to 60 (TKAN…TPAS), and 127 to 152 (QSQF…GNTF). Disordered stretches follow at residues 1-93 (MESQ…MMTQ), 126-174 (PQSQ…PPPM), and 352-440 (GSRN…PGTY). A compositionally biased stretch (low complexity) spans 153–165 (TDSSSADSDMTST). The RNA-binding stretch occupies residues 299–401 (NNGIHINNKV…NSKSKTARAH (103 aa)). Low complexity predominate over residues 402 to 418 (NVSTSNNSPSTDNDSIS). The residue at position 416 (S416) is a Phosphoserine. The span at 419-428 (KSTTEPIQLN) shows a compositional bias: polar residues. Residues 429-440 (NKHDLHLRPGTY) show a composition bias toward basic and acidic residues.

In terms of assembly, homotrimer.

The protein resides in the cytoplasm. Capsid protein (CA) is the structural component of the virus-like particle (VLP), forming the shell that encapsulates the retrotransposons dimeric RNA genome. The particles are assembled from trimer-clustered units and there are holes in the capsid shells that allow for the diffusion of macromolecules. CA also has nucleocapsid-like chaperone activity, promoting primer tRNA(i)-Met annealing to the multipartite primer-binding site (PBS), dimerization of Ty1 RNA and initiation of reverse transcription. The chain is Transposon Ty1-LR2 Gag polyprotein (TY1A-LR2) from Saccharomyces cerevisiae (strain ATCC 204508 / S288c) (Baker's yeast).